The primary structure comprises 223 residues: Small ribosomal subunit protein uS3 (223 aa).

The KH type-2 domain occupies 39–107 (VREFLHKKLA…PVQINIEEVR (69 aa)).

It belongs to the universal ribosomal protein uS3 family. Part of the 30S ribosomal subunit. Forms a tight complex with proteins S10 and S14.

Functionally, binds the lower part of the 30S subunit head. Binds mRNA in the 70S ribosome, positioning it for translation. The chain is Small ribosomal subunit protein uS3 from Francisella tularensis subsp. novicida (strain U112).